Here is a 395-residue protein sequence, read N- to C-terminus: MAVSTIYSTQALNSTHFLTSSSSSKQVFLYRRQPQTNRRFNTLITCAQETIVIGLAADSGCGKSTFMRRLTSVFGGAAKPPKGGNPDSNTLISDTTTVICLDDYHSLDRYGRKEQKVTALDPRANDFDLMYEQVKALKNGIAVEKPIYNHVTGLLDPPELIQPPKILVIEGLHPMFDERVRDLLDFSIYLDISNEVKFAWKIQRDMAERGHSLESIKASIEARKPDFDAFIDPQKQYADAVIEVLPTTLIPDDNEGKVLRVRLIMKEGVKYFSPVYLFDEGSTISWIPCGRKLTCSYPGIKFNYEPDSYFDHEVSVLEMDGQFDRLDELIYVESHLSNLSTKFYGEVTQQMLKHADFPGSNNGTGLFQTIVGLKIRDLYEQLIANKATARAEAKA.

The N-terminal 46 residues, 1 to 46 (MAVSTIYSTQALNSTHFLTSSSSSKQVFLYRRQPQTNRRFNTLITC), are a transit peptide targeting the chloroplast. Cys61 and Cys100 are disulfide-bonded.

Belongs to the phosphoribulokinase family.

The protein localises to the plastid. It is found in the chloroplast. It catalyses the reaction D-ribulose 5-phosphate + ATP = D-ribulose 1,5-bisphosphate + ADP + H(+). It functions in the pathway carbohydrate biosynthesis; Calvin cycle. Its activity is regulated as follows. Light regulated via thioredoxin by reversible oxidation/reduction of sulfhydryl/disulfide groups. This Arabidopsis thaliana (Mouse-ear cress) protein is Phosphoribulokinase, chloroplastic.